A 1083-amino-acid chain; its full sequence is uncharacterized protein (1083 aa).

Positions Ser-93–Ser-145 are disordered. Residues Ser-108 to Ser-145 show a composition bias toward low complexity.

It localises to the virion. This is an uncharacterized protein from Acanthamoeba polyphaga (Amoeba).